A 124-amino-acid polypeptide reads, in one-letter code: Small ribosomal subunit protein bS6 (124 aa).

A disordered region spans residues 96-124; the sequence is ETGPSPMMKEVQREEAKKAAAAQPTEAQA. The span at 114-124 shows a compositional bias: low complexity; sequence AAAAQPTEAQA.

It belongs to the bacterial ribosomal protein bS6 family.

Its function is as follows. Binds together with bS18 to 16S ribosomal RNA. This Burkholderia lata (strain ATCC 17760 / DSM 23089 / LMG 22485 / NCIMB 9086 / R18194 / 383) protein is Small ribosomal subunit protein bS6.